Consider the following 299-residue polypeptide: Quinolinate synthase (299 aa).

H21 and S38 together coordinate iminosuccinate. Residue C83 coordinates [4Fe-4S] cluster. Residues 109 to 111 and S126 contribute to the iminosuccinate site; that span reads YVN. A [4Fe-4S] cluster-binding site is contributed by C170. Iminosuccinate contacts are provided by residues 196-198 and T213; that span reads HPE. C256 provides a ligand contact to [4Fe-4S] cluster.

It belongs to the quinolinate synthase family. Type 2 subfamily. The cofactor is [4Fe-4S] cluster.

Its subcellular location is the cytoplasm. It catalyses the reaction iminosuccinate + dihydroxyacetone phosphate = quinolinate + phosphate + 2 H2O + H(+). The protein operates within cofactor biosynthesis; NAD(+) biosynthesis; quinolinate from iminoaspartate: step 1/1. Functionally, catalyzes the condensation of iminoaspartate with dihydroxyacetone phosphate to form quinolinate. The chain is Quinolinate synthase from Pyrococcus abyssi (strain GE5 / Orsay).